The chain runs to 290 residues: Cilia- and flagella-associated protein 298 (290 aa).

Belongs to the CFAP298 family. As to quaternary structure, interacts with ZMYND10.

It localises to the cytoplasm. It is found in the cytoskeleton. The protein resides in the cilium basal body. Functionally, plays a role in motile cilium function, possibly by acting on outer dynein arm assembly. Seems to be important for initiation rather than maintenance of cilium motility. Required for correct positioning of cilia at the apical cell surface, suggesting an additional role in the planar cell polarity (PCP) pathway. May suppress canonical Wnt signaling activity. This is Cilia- and flagella-associated protein 298 from Mus musculus (Mouse).